The primary structure comprises 465 residues: E3 ubiquitin-protein ligase parkin (465 aa).

The 76-residue stretch at 1 to 76 folds into the Ubiquitin-like domain; the sequence is MIVFVRFNSS…VHIVQRPQRK (76 aa). Phosphoserine; by PINK1 is present on Ser65. A disordered region spans residues 71-96; sequence QRPQRKSHETNASGGDKPQSTPEGSI. The tract at residues 77 to 237 is necessary for PINK1-dependent localization to mitochondria; that stretch reads SHETNASGGD…LITNNSRSIP (161 aa). Thr80 carries the phosphothreonine modification. Residues 80–93 show a composition bias toward polar residues; it reads TNASGGDKPQSTPE. The RING-type 0; atypical zinc-finger motif lies at 141 to 225; it reads PTYHSFFVYC…PTSDKDTSVA (85 aa). Thr175 carries the post-translational modification Phosphothreonine; by PINK1. An SYT11 binding 1 region spans residues 204 to 238; the sequence is TRAEFFFKCGAHPTSDKDTSVALNLITNNSRSIPC. The residue at position 217 (Thr217) is a Phosphothreonine. The tract at residues 234–465 is TRIAD supradomain; the sequence is RSIPCIACTD…ACMGDHWFDV (232 aa). Residues Cys238, Cys241, Cys253, His257, Cys260, Cys263, Cys289, Cys293, Cys332, and Cys337 each coordinate Zn(2+). The RING-type 1 zinc-finger motif lies at 238–293; that stretch reads CIACTDVRNPVLVFQCNHRHVICLDCFHLYCVTRLNDRQFVHDAQLGYSLPCVAGC. Positions 257–293 are SYT11 binding 2; that stretch reads HVICLDCFHLYCVTRLNDRQFVHDAQLGYSLPCVAGC. The segment at 313-377 adopts an IBR-type zinc-finger fold; the sequence is NRYQQYGAEE…CKEAYHEGEC (65 aa). Lys349 participates in a covalent cross-link: Glycyl lysine isopeptide (Lys-Gly) (interchain with G-Cter in ISG15). 4 residues coordinate Zn(2+): Cys352, Cys360, Cys365, and Cys368. A Glycyl lysine isopeptide (Lys-Gly) (interchain with G-Cter in ISG15) cross-link involves residue Lys369. Zn(2+)-binding residues include His373 and Cys377. The tract at residues 378–410 is REP; sequence DSMFEASGATSQAYRVDQRAAEQARWEEASKET. The Zn(2+) site is built by Cys418 and Cys421. The RING-type 2; atypical zinc-finger motif lies at 418–449; that stretch reads CPRCNVPIEKNGGCMHMKCPQPQCKLEWCWNC. Cys431 is a catalytic residue. Cys436, Cys441, Cys446, Cys449, Cys457, and His461 together coordinate Zn(2+).

This sequence belongs to the RBR family. Parkin subfamily. As to quaternary structure, forms an E3 ubiquitin ligase complex with UBE2L3 or UBE2L6. Mediates 'Lys-63'-linked polyubiquitination by associating with UBE2V1. Part of a SCF-like complex, consisting of PRKN, CUL1 and FBXW7. Interacts with SNCAIP. Binds to the C2A and C2B domains of SYT11. Interacts and regulates the turnover of SEPTIN5. Part of a complex, including STUB1, HSP70 and GPR37. The amount of STUB1 in the complex increases during ER stress. STUB1 promotes the dissociation of HSP70 from PRKN and GPR37, thus facilitating PRKN-mediated GPR37 ubiquitination. HSP70 transiently associates with unfolded GPR37 and inhibits the E3 activity of PRKN, whereas, STUB1 enhances the E3 activity of PRKN through promotion of dissociation of HSP70 from PRKN-GPR37 complexes. Interacts with PSMD4 and PACRG. Interacts with LRRK2. Interacts with RANBP2. Interacts with SUMO1 but not SUMO2, which promotes nuclear localization and autoubiquitination. Interacts (via first RING-type domain) with AIMP2 (via N-terminus). Interacts with PSMA7 and RNF41. Interacts with PINK1. Forms a complex with PINK1 and PARK7. Interacts with CHPF, the interaction with isoform 2 may facilitate PRKN transport into the mitochondria. Interacts with MFN2 (phosphorylated), promotes PRKN localization in dysfunctional depolarized mitochondria. Interacts with FBXO7; this promotes translocation to dysfunctional depolarized mitochondria. Interacts with ZNF746. Interacts with heat shock protein 70 family members, including HSPA1L, HSPA1A and HSPA8; interaction HSPA1L promotes translocation to damaged mitochondria. Interacts with BAG4 and, to a lesser extent, BAG5; interaction with BAG4 inhibits translocation to damaged mitochondria. Forms a complex with PRKN and PARK7. Interacts with AMBRA1. Post-translationally, auto-ubiquitinates in an E2-dependent manner leading to its own degradation. Also polyubiquitinated by RNF41 for proteasomal degradation. S-nitrosylated. In terms of processing, phosphorylated. Activation requires phosphorylation at Ser-65 by PINK1 and binding to PINK1 phosphorylated ubiquitin. Phosphorylation at Thr-175 by PINK1 and at Thr-217 is important for mitochondrial localization. Largely confined to neuronal elements, including fibers and neuropil. Highly expressed at the forebrain level, in pyramidal cells of layer V, in various cortical regions and cerebellum. Expressed in the nucleus of diagonal band of Broca, nucleus basalis, bed nucleus of the stria terminalis, and olfactory tubercle. Moderate expression is seen in most neurons of the subthalamic nucleus, heart, skeletal muscle and testis. Moderate expression was found in frontal cortex, parietal cortex, cerebellum, heart, skeletal muscle and testis.

The protein resides in the cytoplasm. The protein localises to the cytosol. Its subcellular location is the nucleus. It is found in the endoplasmic reticulum. It localises to the mitochondrion. The protein resides in the mitochondrion outer membrane. The protein localises to the cell projection. Its subcellular location is the neuron projection. It is found in the postsynaptic density. It localises to the presynapse. The catalysed reaction is [E2 ubiquitin-conjugating enzyme]-S-ubiquitinyl-L-cysteine + [acceptor protein]-L-lysine = [E2 ubiquitin-conjugating enzyme]-L-cysteine + [acceptor protein]-N(6)-ubiquitinyl-L-lysine.. Its pathway is protein modification; protein ubiquitination. With respect to regulation, in the autoinhibited state the side chain of Phe-463 inserts into a hydrophobic groove in RING-0, occluding the ubiquitin acceptor site Cys-431, whereas the REP repressor element binds RING-1 and blocks its E2-binding site. Activation of PRKN requires 2 steps: (1) phosphorylation at Ser-65 by PINK1 and (2) binding to phosphorylated ubiquitin, leading to unlock repression of the catalytic Cys-431 by the RING-0 region via an allosteric mechanism and converting PRKN to its fully-active form. According to another report, phosphorylation at Ser-65 by PINK1 is not essential for activation and only binding to phosphorylated ubiquitin is essential to unlock repression. In addition, ISG15 conjugation positively regulates its ubiquitin E3 ligase activity by suppressing the intramolecular interaction that maintains its autoinhibited conformation. In terms of biological role, functions within a multiprotein E3 ubiquitin ligase complex, catalyzing the covalent attachment of ubiquitin moieties onto substrate proteins. Substrates include SYT11 and VDAC1. Other substrates are BCL2, CCNE1, GPR37, RHOT1/MIRO1, MFN1, MFN2, STUB1, SNCAIP, SEPTIN5, TOMM20, USP30, ZNF746, MIRO1 and AIMP2. Mediates monoubiquitination as well as 'Lys-6', 'Lys-11', 'Lys-48'-linked and 'Lys-63'-linked polyubiquitination of substrates depending on the context. Participates in the removal and/or detoxification of abnormally folded or damaged protein by mediating 'Lys-63'-linked polyubiquitination of misfolded proteins such as PARK7: 'Lys-63'-linked polyubiquitinated misfolded proteins are then recognized by HDAC6, leading to their recruitment to aggresomes, followed by degradation. Mediates 'Lys-63'-linked polyubiquitination of a 22 kDa O-linked glycosylated isoform of SNCAIP, possibly playing a role in Lewy-body formation. Mediates monoubiquitination of BCL2, thereby acting as a positive regulator of autophagy. Protects against mitochondrial dysfunction during cellular stress, by acting downstream of PINK1 to coordinate mitochondrial quality control mechanisms that remove and replace dysfunctional mitochondrial components. Depending on the severity of mitochondrial damage and/or dysfunction, activity ranges from preventing apoptosis and stimulating mitochondrial biogenesis to regulating mitochondrial dynamics and eliminating severely damaged mitochondria via mitophagy. Activation and recruitment onto the outer membrane of damaged/dysfunctional mitochondria (OMM) requires PINK1-mediated phosphorylation of both PRKN and ubiquitin. After mitochondrial damage, functions with PINK1 to mediate the decision between mitophagy or preventing apoptosis by inducing either the poly- or monoubiquitination of VDAC1, respectively; polyubiquitination of VDAC1 promotes mitophagy, while monoubiquitination of VDAC1 decreases mitochondrial calcium influx which ultimately inhibits apoptosis. When cellular stress results in irreversible mitochondrial damage, promotes the autophagic degradation of dysfunctional depolarized mitochondria (mitophagy) by promoting the ubiquitination of mitochondrial proteins such as TOMM20, RHOT1/MIRO1, MFN1 and USP30. Preferentially assembles 'Lys-6'-, 'Lys-11'- and 'Lys-63'-linked polyubiquitin chains, leading to mitophagy. The PINK1-PRKN pathway also promotes fission of damaged mitochondria by PINK1-mediated phosphorylation which promotes the PRKN-dependent degradation of mitochondrial proteins involved in fission such as MFN2. This prevents the refusion of unhealthy mitochondria with the mitochondrial network or initiates mitochondrial fragmentation facilitating their later engulfment by autophagosomes. Regulates motility of damaged mitochondria via the ubiquitination and subsequent degradation of MIRO1 and MIRO2; in motor neurons, this likely inhibits mitochondrial intracellular anterograde transport along the axons which probably increases the chance of the mitochondria undergoing mitophagy in the soma. Involved in mitochondrial biogenesis via the 'Lys-48'-linked polyubiquitination of transcriptional repressor ZNF746/PARIS which leads to its subsequent proteasomal degradation and allows activation of the transcription factor PPARGC1A. Limits the production of reactive oxygen species (ROS). Regulates cyclin-E during neuronal apoptosis. In collaboration with CHPF isoform 2, may enhance cell viability and protect cells from oxidative stress. Independently of its ubiquitin ligase activity, protects from apoptosis by the transcriptional repression of p53/TP53. May protect neurons against alpha synuclein toxicity, proteasomal dysfunction, GPR37 accumulation, and kainate-induced excitotoxicity. May play a role in controlling neurotransmitter trafficking at the presynaptic terminal and in calcium-dependent exocytosis. May represent a tumor suppressor gene. This Rattus norvegicus (Rat) protein is E3 ubiquitin-protein ligase parkin.